Reading from the N-terminus, the 206-residue chain is Outer-membrane lipoprotein carrier protein (206 aa).

An N-terminal signal peptide occupies residues methionine 1 to alanine 21.

This sequence belongs to the LolA family. Monomer.

The protein resides in the periplasm. Participates in the translocation of lipoproteins from the inner membrane to the outer membrane. Only forms a complex with a lipoprotein if the residue after the N-terminal Cys is not an aspartate (The Asp acts as a targeting signal to indicate that the lipoprotein should stay in the inner membrane). The chain is Outer-membrane lipoprotein carrier protein from Nitrosomonas europaea (strain ATCC 19718 / CIP 103999 / KCTC 2705 / NBRC 14298).